A 305-amino-acid polypeptide reads, in one-letter code: tRNA pseudouridine synthase B (305 aa).

Catalysis depends on D39, which acts as the Nucleophile.

The protein belongs to the pseudouridine synthase TruB family. Type 1 subfamily.

The catalysed reaction is uridine(55) in tRNA = pseudouridine(55) in tRNA. In terms of biological role, responsible for synthesis of pseudouridine from uracil-55 in the psi GC loop of transfer RNAs. This Staphylococcus aureus (strain MSSA476) protein is tRNA pseudouridine synthase B.